The sequence spans 187 residues: Hypoxanthine/guanine phosphoribosyltransferase (187 aa).

This sequence belongs to the purine/pyrimidine phosphoribosyltransferase family. Archaeal HPRT subfamily. As to quaternary structure, homodimer.

It localises to the cytoplasm. The catalysed reaction is IMP + diphosphate = hypoxanthine + 5-phospho-alpha-D-ribose 1-diphosphate. It carries out the reaction GMP + diphosphate = guanine + 5-phospho-alpha-D-ribose 1-diphosphate. It functions in the pathway purine metabolism; IMP biosynthesis via salvage pathway; IMP from hypoxanthine: step 1/1. Functionally, catalyzes a salvage reaction resulting in the formation of IMP that is energically less costly than de novo synthesis. The chain is Hypoxanthine/guanine phosphoribosyltransferase from Ferroglobus placidus (strain DSM 10642 / AEDII12DO).